A 159-amino-acid chain; its full sequence is Ribosomal RNA large subunit methyltransferase H (159 aa).

S-adenosyl-L-methionine-binding positions include Leu-76, Gly-108, and 127 to 132; that span reads FGKLTL.

This sequence belongs to the RNA methyltransferase RlmH family. In terms of assembly, homodimer.

The protein resides in the cytoplasm. The enzyme catalyses pseudouridine(1915) in 23S rRNA + S-adenosyl-L-methionine = N(3)-methylpseudouridine(1915) in 23S rRNA + S-adenosyl-L-homocysteine + H(+). Specifically methylates the pseudouridine at position 1915 (m3Psi1915) in 23S rRNA. In Streptococcus sanguinis (strain SK36), this protein is Ribosomal RNA large subunit methyltransferase H.